A 454-amino-acid chain; its full sequence is tRNA modification GTPase MnmE (454 aa).

(6S)-5-formyl-5,6,7,8-tetrahydrofolate is bound by residues Arg-23, Glu-80, and Lys-120. Residues 216 to 377 (GMKVVIAGRP…LRDHLKQSMG (162 aa)) form the TrmE-type G domain. Asn-226 lines the K(+) pocket. Residues 226-231 (NAGKSS), 245-251 (TDIAGTT), 270-273 (DTAG), 335-338 (NKAD), and 358-360 (SAR) contribute to the GTP site. Ser-230 provides a ligand contact to Mg(2+). Residues Thr-245, Ile-247, and Thr-250 each contribute to the K(+) site. Thr-251 is a binding site for Mg(2+). Lys-454 is a binding site for (6S)-5-formyl-5,6,7,8-tetrahydrofolate.

Belongs to the TRAFAC class TrmE-Era-EngA-EngB-Septin-like GTPase superfamily. TrmE GTPase family. In terms of assembly, homodimer. Heterotetramer of two MnmE and two MnmG subunits. K(+) is required as a cofactor.

Its subcellular location is the cytoplasm. Exhibits a very high intrinsic GTPase hydrolysis rate. Involved in the addition of a carboxymethylaminomethyl (cmnm) group at the wobble position (U34) of certain tRNAs, forming tRNA-cmnm(5)s(2)U34. In Yersinia pseudotuberculosis serotype IB (strain PB1/+), this protein is tRNA modification GTPase MnmE.